The sequence spans 240 residues: Large ribosomal subunit protein uL2 (240 aa).

Residues 1–11 show a composition bias toward polar residues; it reads MGKRLISQNRG. Disordered stretches follow at residues 1–28 and 206–240; these read MGKRLISQNRGRGTPKYRSPTHKRKGAV and GGGRHQHLGKPSSVSRHTSPGRKVGHIASRRTGRK. Basic residues-rich tracts occupy residues 13–28 and 224–240; these read GTPKYRSPTHKRKGAV and SPGRKVGHIASRRTGRK.

Belongs to the universal ribosomal protein uL2 family. In terms of assembly, part of the 50S ribosomal subunit. Forms a bridge to the 30S subunit in the 70S ribosome.

Its function is as follows. One of the primary rRNA binding proteins. Required for association of the 30S and 50S subunits to form the 70S ribosome, for tRNA binding and peptide bond formation. It has been suggested to have peptidyltransferase activity; this is somewhat controversial. Makes several contacts with the 16S rRNA in the 70S ribosome. The polypeptide is Large ribosomal subunit protein uL2 (Methanococcus maripaludis (strain C5 / ATCC BAA-1333)).